Reading from the N-terminus, the 1135-residue chain is MARIPRCDFLGLPGICYLLSFLLAGLLLPRASAFNLDVMGAIRKEGEPGSLFGFSVALHRQLQPRPQSWLLVGAPQALALPGQQANRTGGLFACPLSLEETDCYRVDIDRGANVQKESKENQWLGVSVRSQGAGGKVVTCAHRYESRQRVDQVLETRDVIGRCFVLSQDLAIRDELDGGEWKFCEGRPQGHEQFGFCQQGTAATFSPDSHYLIFGAPGTYNWKGLLFVTNIDSSDPDQLVYKTLDPADRLTGPAGDLTLNSYLGFSIDSGKGLMRSEELSFVAGAPRANHKGAVVILRKDSASRLIPEVVLSGERLTSGFGYSLAVTDLNSDGWADLIVGAPYFFERQEELGGAVYVYMNQGGHWADISPLRLCGSPDSMFGISLAVLGDLNQDGFPDIAVGAPFDGDGKVFIYHGSSLGVVTKPSQVLEGEAVGIKSFGYSLSGGLDVDGNHYPDLLVGSLADTAALFRARPVLHVSQEIFIDPRAIDLEQPNCADGRLVCVHVKVCFSYVAVPSSYSPIVVLDYVLDGDTDRRLRGQAPRVTFPGRGPDDLKHQSSGTVSLKHQHDRVCGDTVFQLQENVKDKLRAIVVTLSYGLQTPRLRRQAPDQGLPLVAPILNAHQPSTQRTEIHFLKQGCGDDKICQSNLQLAQAQFCSRISDTEFQALPMDLDGTALFALSGQPFIGLELTVTNLPSDPARPQADGDDAHEAQLLATLPASLRYSGVRTLDSVEKPLCLSNENASHVECELGNPMKRGTQVTFYLILSTSGITIETTELKVELLLATISEQDLHPVSVRAHVFIELPLSISGVATPQQLFFSGKVKGESAMRSERDVGSKVKYEVTVSNQGQSLNTLGSAFLNIMWPHEIANGKWLLYPMRVELEGGQGPEKKGICSPRPNILHLDVDSRDRRRRELGQPEPQEPPEKVEPSTSWWPVSSAEKRNVTLDCAQGTAKCVVFSCPLYSFDRAAVLHVWGRLWNSTFLEEYMSVKSLEVIVRANITVKSSIKNLLLRDASTVIPVMVYLDPVAVVAEGVPWWVILLAVLAGLLVLALLVLLLWKLGFFKRAKHPEATVPQYHAVKILREDRQQFKEEKTGTIQRSNWGNSQWEGSDAHPILAADWHPELGPDGHPVSVTA.

The N-terminal stretch at 1–33 (MARIPRCDFLGLPGICYLLSFLLAGLLLPRASA) is a signal peptide. The Extracellular portion of the chain corresponds to 34-1036 (FNLDVMGAIR…VAVVAEGVPW (1003 aa)). FG-GAP repeat units lie at residues 38 to 103 (VMGA…ETDC), 110 to 165 (RGAN…RCFV), 185 to 238 (EGRP…DPDQ), 248 to 305 (DRLT…ASRL), 306 to 367 (IPEV…HWAD), 368 to 423 (ISPL…GVVT), and 427 to 486 (QVLE…IDPR). A glycan (N-linked (GlcNAc...) asparagine) is linked at N86. Disulfide bonds link C94/C103, C140/C163, and C184/C197. Positions 328, 330, 332, 336, 390, 392, 394, 398, 448, 450, 452, 454, and 456 each coordinate Ca(2+). 6 disulfide bridges follow: C495/C502, C508/C571, C637/C643, C736/C747, C894/C948, and C955/C960. N741 carries N-linked (GlcNAc...) asparagine glycosylation. Residues 905 to 916 (VDSRDRRRRELG) are compositionally biased toward basic and acidic residues. The tract at residues 905-933 (VDSRDRRRRELGQPEPQEPPEKVEPSTSW) is disordered. N-linked (GlcNAc...) asparagine glycosylation is present at N943. 2 N-linked (GlcNAc...) asparagine glycosylation sites follow: N979 and N999. Residues 1037–1057 (WVILLAVLAGLLVLALLVLLL) traverse the membrane as a helical segment. The Cytoplasmic portion of the chain corresponds to 1058–1135 (WKLGFFKRAK…PDGHPVSVTA (78 aa)). Positions 1061–1065 (GFFKR) match the GFFKR motif motif. A run of 3 repeats spans residues 1111-1114 (DAHP), 1119-1122 (DWHP), and 1127-1130 (DGHP). The segment at 1111–1130 (DAHPILAADWHPELGPDGHP) is 3 X 4 AA repeats of D-X-H-P.

The protein belongs to the integrin alpha chain family. Interacts (via C-terminus intracellular tail region) with CIB1; the interaction is stabilized/increased in a calcium- and magnesium-dependent manner. Heterodimer of an alpha and a beta subunit. The alpha subunit is composed of a heavy and a light chain linked by a disulfide bond. Alpha-7 associates with beta-1. Interacts with COMP. Post-translationally, ADP-ribosylated on at least two sites of the extracellular domain in skeletal myotubes. A 70 kDa form is created by proteolytic cleavage. Cleavage is elevated during myogenic differentiation and the cleaved form enhances cell adhesion and spreading on laminin. As to expression, expressed in skeletal and cardiac muscle. Expressed in replicating myoblasts. In differentiated muscle fibers localizes between fibers and the surrounding matrix. Isoform Alpha-7X1A and isoform Alpha-7X1B are expressed at myotendinous and neuromuscular junctions; isoform Alpha-7X1C is expressed at neuromuscular junctions and at extrasynaptic sites.

Its subcellular location is the membrane. Integrin alpha-7/beta-1 is the primary laminin receptor on skeletal myoblasts and adult myofibers. During myogenic differentiation, it may induce changes in the shape and mobility of myoblasts, and facilitate their localization at laminin-rich sites of secondary fiber formation. Involved in the maintenance of the myofibers cytoarchitecture as well as for their anchorage, viability and functional integrity. Required to promote contractile phenotype acquisition in differentiated airway smooth muscle (ASM) cells. Acts as a Schwann cell receptor for laminin-2. Acts as a receptor of COMP and mediates its effect on vascular smooth muscle cells (VSMCs) maturation. The polypeptide is Integrin alpha-7 (Itga7) (Rattus norvegicus (Rat)).